A 158-amino-acid chain; its full sequence is NAD(P)H-quinone oxidoreductase subunit J, chloroplastic (158 aa).

It belongs to the complex I 30 kDa subunit family. NDH is composed of at least 16 different subunits, 5 of which are encoded in the nucleus.

It localises to the plastid. Its subcellular location is the chloroplast thylakoid membrane. It carries out the reaction a plastoquinone + NADH + (n+1) H(+)(in) = a plastoquinol + NAD(+) + n H(+)(out). The enzyme catalyses a plastoquinone + NADPH + (n+1) H(+)(in) = a plastoquinol + NADP(+) + n H(+)(out). Functionally, NDH shuttles electrons from NAD(P)H:plastoquinone, via FMN and iron-sulfur (Fe-S) centers, to quinones in the photosynthetic chain and possibly in a chloroplast respiratory chain. The immediate electron acceptor for the enzyme in this species is believed to be plastoquinone. Couples the redox reaction to proton translocation, and thus conserves the redox energy in a proton gradient. This is NAD(P)H-quinone oxidoreductase subunit J, chloroplastic from Guizotia abyssinica (Niger).